Consider the following 351-residue polypeptide: Photosystem II D2 protein (351 aa).

A helical transmembrane segment spans residues 39 to 59 (TAYLAIGGWLTGTTFVTSWYT). Residue His116 coordinates chlorophyll a. A helical membrane pass occupies residues 123–139 (GFMLRQFELARLIGIRP). Pheophytin a is bound by residues Gln128 and Asn141. A helical transmembrane segment spans residues 151–164 (VFVSVFLIYPLGQS). A chlorophyll a-binding site is contributed by His196. The helical transmembrane segment at 206-226 (GALLSAIHGVTVENTLYQDGE) threads the bilayer. 2 residues coordinate a plastoquinone: His213 and Phe260. His213 is a binding site for Fe cation. His267 lines the Fe cation pocket. Residues 277–293 (GLWTSSIGIIGLALNLR) form a helical membrane-spanning segment.

Belongs to the reaction center PufL/M/PsbA/D family. In terms of assembly, PSII is composed of 1 copy each of membrane proteins PsbA, PsbB, PsbC, PsbD, PsbE, PsbF, PsbH, PsbI, PsbJ, PsbK, PsbL, PsbM, PsbT, PsbX, PsbY, PsbZ, Psb30/Ycf12, peripheral proteins PsbO, CyanoQ (PsbQ), PsbU, PsbV and a large number of cofactors. It forms dimeric complexes. The D1/D2 heterodimer binds P680, chlorophylls that are the primary electron donor of PSII, and subsequent electron acceptors. It shares a non-heme iron and each subunit binds pheophytin, quinone, additional chlorophylls, carotenoids and lipids. There is also a Cl(-1) ion associated with D1 and D2, which is required for oxygen evolution. The PSII complex binds additional chlorophylls, carotenoids and specific lipids. is required as a cofactor.

It is found in the host cellular thylakoid membrane. The enzyme catalyses 2 a plastoquinone + 4 hnu + 2 H2O = 2 a plastoquinol + O2. Its function is as follows. Photosystem II (PSII) is a light-driven water:plastoquinone oxidoreductase that uses light energy to abstract electrons from H(2)O, generating O(2) and a proton gradient subsequently used for ATP formation. It consists of a core antenna complex that captures photons, and an electron transfer chain that converts photonic excitation into a charge separation. The D1/D2 (PsbA/PsbD) reaction center heterodimer binds P680, the primary electron donor of PSII as well as several subsequent electron acceptors. D2 is needed for assembly of a stable PSII complex. This chain is Photosystem II D2 protein (psbD), found in Synechococcus phage S-RSM2.